Reading from the N-terminus, the 644-residue chain is Protein cueball (644 aa).

Positions 1–26 (MIRIRFGMDVLLVLLLATCLLSPAHG) are cleaved as a signal peptide. Residues 27-531 (TPLEWDFAVT…VCLTPKVWTS (505 aa)) lie on the Extracellular side of the membrane. Asparagine 82 and asparagine 108 each carry an N-linked (GlcNAc...) asparagine glycan. LDL-receptor class B repeat units lie at residues 121–166 (MNLF…DVCR), 167–211 (RKLY…DQLS), and 212–257 (DRLF…TNDA). N-linked (GlcNAc...) asparagine glycosylation is found at asparagine 175, asparagine 190, and asparagine 196. Residue asparagine 313 is glycosylated (N-linked (GlcNAc...) asparagine). 2 consecutive EGF-like domains span residues 398 to 430 (EIRE…FTGE) and 433 to 471 (EVSV…ARCE). Intrachain disulfides connect cysteine 402–cysteine 411, cysteine 406–cysteine 421, cysteine 437–cysteine 447, cysteine 441–cysteine 459, and cysteine 461–cysteine 470. 2 N-linked (GlcNAc...) asparagine glycosylation sites follow: asparagine 473 and asparagine 508. Residues 532 to 552 (SVIIILVIGIVSSLLLVAVIV) form a helical membrane-spanning segment. Residues 553–644 (HGIRRLYKPK…LIHNMEDDLY (92 aa)) lie on the Cytoplasmic side of the membrane.

It belongs to the cueball family.

The protein localises to the cell membrane. In terms of biological role, has a role in spermatogenesis and oogenesis. This Drosophila erecta (Fruit fly) protein is Protein cueball.